Reading from the N-terminus, the 357-residue chain is DNA replication and repair protein RecF (357 aa).

30-37 (GANGSGKT) is a binding site for ATP.

The protein belongs to the RecF family.

It localises to the cytoplasm. The RecF protein is involved in DNA metabolism; it is required for DNA replication and normal SOS inducibility. RecF binds preferentially to single-stranded, linear DNA. It also seems to bind ATP. This is DNA replication and repair protein RecF from Salmonella heidelberg (strain SL476).